The following is a 457-amino-acid chain: Siroheme synthase (457 aa).

Residues 1–204 form a precorrin-2 dehydrogenase /sirohydrochlorin ferrochelatase region; sequence MDHLPIFCQL…ADEKAVNATT (204 aa). NAD(+) is bound by residues 22-23 and 43-44; these read DV and LT. Serine 128 carries the phosphoserine modification. Positions 216–457 are uroporphyrinogen-III C-methyltransferase; sequence GEVVLVGAGP…RDKLNWFSNY (242 aa). Proline 225 provides a ligand contact to S-adenosyl-L-methionine. Aspartate 248 functions as the Proton acceptor in the catalytic mechanism. Lysine 270 acts as the Proton donor in catalysis. Residues 301 to 303, isoleucine 306, 331 to 332, methionine 382, and glycine 411 contribute to the S-adenosyl-L-methionine site; these read GGD and TA.

This sequence in the N-terminal section; belongs to the precorrin-2 dehydrogenase / sirohydrochlorin ferrochelatase family. The protein in the C-terminal section; belongs to the precorrin methyltransferase family.

It carries out the reaction uroporphyrinogen III + 2 S-adenosyl-L-methionine = precorrin-2 + 2 S-adenosyl-L-homocysteine + H(+). It catalyses the reaction precorrin-2 + NAD(+) = sirohydrochlorin + NADH + 2 H(+). The catalysed reaction is siroheme + 2 H(+) = sirohydrochlorin + Fe(2+). It functions in the pathway cofactor biosynthesis; adenosylcobalamin biosynthesis; precorrin-2 from uroporphyrinogen III: step 1/1. It participates in cofactor biosynthesis; adenosylcobalamin biosynthesis; sirohydrochlorin from precorrin-2: step 1/1. The protein operates within porphyrin-containing compound metabolism; siroheme biosynthesis; precorrin-2 from uroporphyrinogen III: step 1/1. Its pathway is porphyrin-containing compound metabolism; siroheme biosynthesis; siroheme from sirohydrochlorin: step 1/1. It functions in the pathway porphyrin-containing compound metabolism; siroheme biosynthesis; sirohydrochlorin from precorrin-2: step 1/1. Multifunctional enzyme that catalyzes the SAM-dependent methylations of uroporphyrinogen III at position C-2 and C-7 to form precorrin-2 via precorrin-1. Then it catalyzes the NAD-dependent ring dehydrogenation of precorrin-2 to yield sirohydrochlorin. Finally, it catalyzes the ferrochelation of sirohydrochlorin to yield siroheme. The protein is Siroheme synthase of Salmonella gallinarum (strain 287/91 / NCTC 13346).